Here is a 154-residue protein sequence, read N- to C-terminus: Myoglobin (154 aa).

In terms of domain architecture, Globin spans 2 to 148; sequence GLSDGEWQLV…FRNDIAAKYK (147 aa). S4 carries the post-translational modification Phosphoserine. A nitrite-binding site is contributed by H65. H65 contacts O2. Residue T68 is modified to Phosphothreonine. H94 contributes to the heme b binding site.

The protein belongs to the globin family. As to quaternary structure, monomeric.

The protein localises to the cytoplasm. It is found in the sarcoplasm. The enzyme catalyses Fe(III)-heme b-[protein] + nitric oxide + H2O = Fe(II)-heme b-[protein] + nitrite + 2 H(+). The catalysed reaction is H2O2 + AH2 = A + 2 H2O. Monomeric heme protein which primary function is to store oxygen and facilitate its diffusion within muscle tissues. Reversibly binds oxygen through a pentacoordinated heme iron and enables its timely and efficient release as needed during periods of heightened demand. Depending on the oxidative conditions of tissues and cells, and in addition to its ability to bind oxygen, it also has a nitrite reductase activity whereby it regulates the production of bioactive nitric oxide. Under stress conditions, like hypoxia and anoxia, it also protects cells against reactive oxygen species thanks to its pseudoperoxidase activity. In Ondatra zibethicus (Muskrat), this protein is Myoglobin (MB).